The primary structure comprises 580 residues: Rap guanine nucleotide exchange factor 5 (580 aa).

One can recognise an N-terminal Ras-GEF domain in the interval 67–200; sequence DRYVVVSGTP…ELKEFQKILG (134 aa). The 236-residue stretch at 344-579 folds into the Ras-GEF domain; that stretch reads NTWDLALELM…FELSHRLEPR (236 aa).

As to expression, in the embryo, expressed in young neurons of the developing telencephalon, diencephalon and hindbrain. Not expressed in progenitor cells in the ventricular zone.

The protein resides in the nucleus. Its function is as follows. Guanine nucleotide exchange factor (GEF) for RAP1A, RAP2A and MRAS/M-Ras-GTP. Its association with MRAS inhibits Rap1 activation. This Rattus norvegicus (Rat) protein is Rap guanine nucleotide exchange factor 5 (Rapgef5).